Here is a 266-residue protein sequence, read N- to C-terminus: Phosphatidylserine decarboxylase proenzyme (266 aa).

Residues aspartate 74, histidine 135, and serine 237 each act as charge relay system; for autoendoproteolytic cleavage activity in the active site. Serine 237 functions as the Schiff-base intermediate with substrate; via pyruvic acid; for decarboxylase activity in the catalytic mechanism. Serine 237 bears the Pyruvic acid (Ser); by autocatalysis mark.

The protein belongs to the phosphatidylserine decarboxylase family. PSD-B subfamily. Prokaryotic type I sub-subfamily. As to quaternary structure, heterodimer of a large membrane-associated beta subunit and a small pyruvoyl-containing alpha subunit. Pyruvate serves as cofactor. In terms of processing, is synthesized initially as an inactive proenzyme. Formation of the active enzyme involves a self-maturation process in which the active site pyruvoyl group is generated from an internal serine residue via an autocatalytic post-translational modification. Two non-identical subunits are generated from the proenzyme in this reaction, and the pyruvate is formed at the N-terminus of the alpha chain, which is derived from the carboxyl end of the proenzyme. The autoendoproteolytic cleavage occurs by a canonical serine protease mechanism, in which the side chain hydroxyl group of the serine supplies its oxygen atom to form the C-terminus of the beta chain, while the remainder of the serine residue undergoes an oxidative deamination to produce ammonia and the pyruvoyl prosthetic group on the alpha chain. During this reaction, the Ser that is part of the protease active site of the proenzyme becomes the pyruvoyl prosthetic group, which constitutes an essential element of the active site of the mature decarboxylase.

It is found in the cell membrane. It carries out the reaction a 1,2-diacyl-sn-glycero-3-phospho-L-serine + H(+) = a 1,2-diacyl-sn-glycero-3-phosphoethanolamine + CO2. It functions in the pathway phospholipid metabolism; phosphatidylethanolamine biosynthesis; phosphatidylethanolamine from CDP-diacylglycerol: step 2/2. In terms of biological role, catalyzes the formation of phosphatidylethanolamine (PtdEtn) from phosphatidylserine (PtdSer). The chain is Phosphatidylserine decarboxylase proenzyme from Campylobacter jejuni subsp. jejuni serotype O:2 (strain ATCC 700819 / NCTC 11168).